A 568-amino-acid chain; its full sequence is MTLRLSRRAYAEMYGPTTGDRIRLADTELLIEVERDHTLYGEEVKFGGGKVIRDGMGQSQLPAADVADTVITNAVILDHWGIVKADIAIKHGRIAAIGKAGNPDIQPGVTIAIGAATEIIAGEGLIVTAGGIDTHIHFISPQQIDEALASGVTTMIGGGTGPATGTNATTCTPGPWHMERMLQAADGWPINLGFLGKGNASRPQPLVEQIEAGAIGLKLHEDWGTTPAAIDNCLTVADDTDTQVAIHTDTLNEAGFVEATVAAFKGRTIHTYHTEGAGGGHAPDILKVCGEANVLPSSTNPTRPYTINTLDEHLDMLMVCHHLDPSIAEDLAFAESRIRRETIAAEDILHDLGALSMLSSDSQAMGRVGEVIIRTWQTAHKMKVQRGALTGDGARNDNFRAKRYVAKYTINPALTHGIAHEVGSIEPGKWADLVLWEPAFFGVKPAMIIKGGMIAVAQMGDPNASIPTPQPVHYREMFATRGGALARTSLTFVSQLALDAGIGARYGLAKRLVPVRGCRTVTKRDMIHNAWQPAIRVDPETYDVVADGALLTCEPAAVLPMAQRYFLF.

The region spanning 130 to 568 (GGIDTHIHFI…LPMAQRYFLF (439 aa)) is the Urease domain. Residues histidine 135, histidine 137, and lysine 218 each contribute to the Ni(2+) site. At lysine 218 the chain carries N6-carboxylysine. Histidine 220 is a substrate binding site. Ni(2+) is bound by residues histidine 247 and histidine 273. Histidine 321 functions as the Proton donor in the catalytic mechanism. A Ni(2+)-binding site is contributed by aspartate 361.

This sequence belongs to the metallo-dependent hydrolases superfamily. Urease alpha subunit family. Heterotrimer of UreA (gamma), UreB (beta) and UreC (alpha) subunits. Three heterotrimers associate to form the active enzyme. Ni cation is required as a cofactor. In terms of processing, carboxylation allows a single lysine to coordinate two nickel ions.

Its subcellular location is the cytoplasm. It catalyses the reaction urea + 2 H2O + H(+) = hydrogencarbonate + 2 NH4(+). It participates in nitrogen metabolism; urea degradation; CO(2) and NH(3) from urea (urease route): step 1/1. The chain is Urease subunit alpha from Burkholderia pseudomallei (strain 668).